The primary structure comprises 287 residues: Elongation factor Ts (287 aa).

The involved in Mg(2+) ion dislocation from EF-Tu stretch occupies residues 80–83; sequence TDFL.

This sequence belongs to the EF-Ts family.

It localises to the cytoplasm. Associates with the EF-Tu.GDP complex and induces the exchange of GDP to GTP. It remains bound to the aminoacyl-tRNA.EF-Tu.GTP complex up to the GTP hydrolysis stage on the ribosome. The protein is Elongation factor Ts of Pseudomonas putida (strain W619).